The following is a 186-amino-acid chain: Ribosome-recycling factor (186 aa).

The protein belongs to the RRF family.

It localises to the cytoplasm. Responsible for the release of ribosomes from messenger RNA at the termination of protein biosynthesis. May increase the efficiency of translation by recycling ribosomes from one round of translation to another. The polypeptide is Ribosome-recycling factor (Cupriavidus necator (strain ATCC 17699 / DSM 428 / KCTC 22496 / NCIMB 10442 / H16 / Stanier 337) (Ralstonia eutropha)).